The chain runs to 168 residues: Cell division inhibitor SulA (168 aa).

The interval 1-20 (MSTQSVSSHNIESSSFSANQ) is disordered. The segment at 105–111 (ALLTGNY) is ftsZ binding. The lon protease binding stretch occupies residues 161 to 168 (KIHSTLYH).

This sequence belongs to the SulA family. As to quaternary structure, interacts with FtsZ. Is rapidly cleaved and degraded by the Lon protease once DNA damage is repaired.

In terms of biological role, component of the SOS system and an inhibitor of cell division. Accumulation of SulA causes rapid cessation of cell division and the appearance of long, non-septate filaments. In the presence of GTP, binds a polymerization-competent form of FtsZ in a 1:1 ratio, thus inhibiting FtsZ polymerization and therefore preventing it from participating in the assembly of the Z ring. This mechanism prevents the premature segregation of damaged DNA to daughter cells during cell division. This chain is Cell division inhibitor SulA, found in Pectobacterium atrosepticum (strain SCRI 1043 / ATCC BAA-672) (Erwinia carotovora subsp. atroseptica).